A 476-amino-acid polypeptide reads, in one-letter code: MELLYVCLVCVFVFLVSLLLLYKKKSGEGLPPGKTGWPVFGESLEFLSSGWKGHPEKFIFDRVAKYSSSVFKTHLLGEEAAVFCGASANKFLFSNENKLVQAWWPNSVNKVFPSSTQTSSKEEAIKMRKMLPNFFKPEALQRYVGIMDHITQRHFATGWENKEQVVVFPLTKRYTFWLACRLFLSVEDPKHVAKFADPFDVLASGLISIPIDLPGTPFNRAIKASNFIRKELVRIIKQRKIDLGEGKVSSTQDILSHMLLTCDENGKFLGDLDIADKILGLLIGGHDTASSACSFIVKYLAELPHIYQRVYTEQMEIAKSKGPGELLRWEDIQKMKYSWNVACEVLRLAPPLQGAFREALSDFMFNGFYIPKGWKIYWSANSTHKREEFFPDPEKFDPSRFEGSGPAPYTFVPFGGGPRMCPGKEYARLEILVFMHHLVKRFKFEKIIPHEKIIVNPMPIPANGLPLRLYPHHHNP.

The helical transmembrane segment at 2–22 (ELLYVCLVCVFVFLVSLLLLY) threads the bilayer. Residue Cys-421 coordinates heme.

Belongs to the cytochrome P450 family. It depends on heme as a cofactor. As to expression, specifically expressed in roots.

Its subcellular location is the membrane. It carries out the reaction beta-amyrin + 3 reduced [NADPH--hemoprotein reductase] + 3 O2 = oleanolate + 3 oxidized [NADPH--hemoprotein reductase] + 4 H2O + 4 H(+). Functionally, catalyzes the carboxylation of beta-amyrin at the C-28 position to form oleanolate. Catalyzes the carboxylation of alpha-amyrin at the C-28 position to form ursolate. The protein is Beta-amyrin 28-monooxygenase (CYP716A44) of Solanum lycopersicum (Tomato).